Consider the following 122-residue polypeptide: Large ribosomal subunit protein uL14 (122 aa).

It belongs to the universal ribosomal protein uL14 family. In terms of assembly, part of the 50S ribosomal subunit. Forms a cluster with proteins L3 and L19. In the 70S ribosome, L14 and L19 interact and together make contacts with the 16S rRNA in bridges B5 and B8.

Binds to 23S rRNA. Forms part of two intersubunit bridges in the 70S ribosome. The sequence is that of Large ribosomal subunit protein uL14 from Cyanothece sp. (strain PCC 7425 / ATCC 29141).